The sequence spans 528 residues: NAC domain-containing protein 13 (528 aa).

The region spanning 10-160 (LAPGFRFHPT…AYVLYKIYKK (151 aa)) is the NAC domain. The DNA-binding element occupies 107 to 166 (VGEKKTLVFHRGRAPNGERTNWVMHEYTLHKEELKRCGGEDVKDAYVLYKIYKKSGSGPK). A disordered region spans residues 388-419 (EAPGTGDSSEFLNPVPSGISTTNEDDPSKDES). Residues 499–519 (FFCLSIIGALCALFWVIIGTM) form a helical membrane-spanning segment.

In terms of assembly, interacts with RCD1. In terms of tissue distribution, expressed in roots, rosette leaves, shoot apex, stems and flowers.

The protein resides in the endoplasmic reticulum membrane. It localises to the nucleus. In terms of biological role, transcriptional activator activated by proteolytic cleavage through regulated intramembrane proteolysis (RIP). Involved in oxidative stress tolerance by mediating regulation of mitochondrial retrograde signaling during mitochondrial dysfunction. Interacts directly with the mitochondrial dysfunction DNA consensus motif 5'-CTTGNNNNNCA[AC]G-3', a cis-regulatory elements of several mitochondrial retrograde regulation-induced genes, and triggers increased oxidative stress tolerance. This chain is NAC domain-containing protein 13, found in Arabidopsis thaliana (Mouse-ear cress).